Consider the following 338-residue polypeptide: Ketol-acid reductoisomerase (NADP(+)) (338 aa).

The region spanning Ile-3 to Thr-183 is the KARI N-terminal Rossmann domain. NADP(+) contacts are provided by residues Tyr-26–Gln-29, Arg-49, Ser-52, Ser-54, and Asp-84–Gln-87. His-109 is a catalytic residue. Gly-135 serves as a coordination point for NADP(+). Positions Thr-184 to Val-329 constitute a KARI C-terminal knotted domain. Mg(2+) is bound by residues Asp-192, Glu-196, Glu-228, and Glu-232. Ser-253 is a substrate binding site.

It belongs to the ketol-acid reductoisomerase family. Requires Mg(2+) as cofactor.

The enzyme catalyses (2R)-2,3-dihydroxy-3-methylbutanoate + NADP(+) = (2S)-2-acetolactate + NADPH + H(+). The catalysed reaction is (2R,3R)-2,3-dihydroxy-3-methylpentanoate + NADP(+) = (S)-2-ethyl-2-hydroxy-3-oxobutanoate + NADPH + H(+). The protein operates within amino-acid biosynthesis; L-isoleucine biosynthesis; L-isoleucine from 2-oxobutanoate: step 2/4. It functions in the pathway amino-acid biosynthesis; L-valine biosynthesis; L-valine from pyruvate: step 2/4. Its function is as follows. Involved in the biosynthesis of branched-chain amino acids (BCAA). Catalyzes an alkyl-migration followed by a ketol-acid reduction of (S)-2-acetolactate (S2AL) to yield (R)-2,3-dihydroxy-isovalerate. In the isomerase reaction, S2AL is rearranged via a Mg-dependent methyl migration to produce 3-hydroxy-3-methyl-2-ketobutyrate (HMKB). In the reductase reaction, this 2-ketoacid undergoes a metal-dependent reduction by NADPH to yield (R)-2,3-dihydroxy-isovalerate. This Corynebacterium jeikeium (strain K411) protein is Ketol-acid reductoisomerase (NADP(+)).